The sequence spans 212 residues: External core antigen (212 aa).

The first 19 residues, 1–19, serve as a signal peptide directing secretion; the sequence is MQLFHLCLIISCSCPTVQA. An HBEAG region spans residues 25–27; the sequence is GWL. The segment at 165–212 is disordered; it reads NAPILSTLPETTVVRRRGRSPRRRTPSPRRRRSQSPRRRRSQSRESQC. Positions 178–205 are enriched in basic residues; it reads VRRRGRSPRRRTPSPRRRRSQSPRRRRS. The 1; half-length repeat unit spans residues 184–190; the sequence is SPRRRTP. The interval 184–206 is 3 X 8 AA repeats of S-P-R-R-R-R-S-Q; the sequence is SPRRRTPSPRRRRSQSPRRRRSQ. The propeptide occupies 184 to 212; the sequence is SPRRRTPSPRRRRSQSPRRRRSQSRESQC. Repeat copies occupy residues 191–198 and 199–206.

This sequence belongs to the orthohepadnavirus precore antigen family. In terms of assembly, homodimerizes. Phosphorylated. In terms of processing, cleaved by host furin.

The protein resides in the secreted. It localises to the host nucleus. Its function is as follows. May regulate immune response to the intracellular capsid in acting as a T-cell tolerogen, by having an immunoregulatory effect which prevents destruction of infected cells by cytotoxic T-cells. This immune regulation may predispose to chronicity during perinatal infections and prevent severe liver injury during adult infections. The polypeptide is External core antigen (Hepatitis B virus genotype B2 (isolate Indonesia/pIDW420/1988) (HBV-B)).